A 500-amino-acid polypeptide reads, in one-letter code: Lysine--tRNA ligase (500 aa).

Mg(2+) is bound by residues glutamate 410 and glutamate 417.

The protein belongs to the class-II aminoacyl-tRNA synthetase family. Homodimer. The cofactor is Mg(2+).

The protein resides in the cytoplasm. The enzyme catalyses tRNA(Lys) + L-lysine + ATP = L-lysyl-tRNA(Lys) + AMP + diphosphate. This Pseudomonas savastanoi pv. phaseolicola (strain 1448A / Race 6) (Pseudomonas syringae pv. phaseolicola (strain 1448A / Race 6)) protein is Lysine--tRNA ligase.